A 141-amino-acid polypeptide reads, in one-letter code: MNAKEILVHSLRLLENGDARGWCDLFHPEGVLEFPYAPPGWKTRFEGRETIWAHMRLFPEHLTVRFTDVQFYETADPDLAIGEFHGDGVATVSGGKLAQDYISVLRTRDGQILLYRDFWNPLRHLEALGGVEAAAKIVQGA.

Belongs to the PhzA/PhzB family.

This is an uncharacterized protein from Pseudomonas aeruginosa (strain ATCC 15692 / DSM 22644 / CIP 104116 / JCM 14847 / LMG 12228 / 1C / PRS 101 / PAO1).